The following is a 1096-amino-acid chain: Lysine-specific demethylase 4B (1096 aa).

The JmjN domain maps to 15-57; it reads IMTFRPTMEEFKDFNKYVAYIESQGAHRAGLAKIIPPKEWKPR. 2-oxoglutarate is bound at residue Y133. One can recognise a JmjC domain in the interval 146 to 309; it reads VAQWNIGSLR…YGKVATQCTC (164 aa). Residues H189 and E191 each contribute to the Fe cation site. N199 and K207 together coordinate 2-oxoglutarate. C235 and H241 together coordinate Zn(2+). K242 is a 2-oxoglutarate binding site. H277 is a Fe cation binding site. Zn(2+) is bound by residues C307 and C309. Residues 369-382 are compositionally biased toward basic residues; sequence LLRRSHRKRSQPKK. Disordered stretches follow at residues 369-478 and 557-649; these read LLRR…SEEA and KGPT…VSDP. Positions 391-406 are enriched in low complexity; it reads PGEGTAGAALLEEAGG. Over residues 413 to 425 the composition is skewed to acidic residues; sequence GPEVDPEEEEEEP. Residues 430 to 443 are compositionally biased toward basic and acidic residues; that stretch reads HGREAEGAEEDGRG. The span at 444–458 shows a compositional bias: basic residues; sequence KLRPTKAKSERKKKS. S566 is modified (phosphoserine). The residue at position 602 (K602) is an N6-acetyllysine. Over residues 632-648 the composition is skewed to acidic residues; the sequence is SSDEEASPFSGEEDVSD. Residues 731–789 form a PHD-type 1 zinc finger; the sequence is MCFTSGGENTEPLPANSYIGDDGTSPLIACGKCCLQVHASCYGIRPELVNEGWTCSRCA. The C2HC pre-PHD-type zinc finger occupies 794–827; that stretch reads TAECCLCNLRGGALQMTTDRRWIHVICAIAVPEA. The PHD-type 2 zinc finger occupies 850-907; that stretch reads LKCVYCRKRMKKVSGACIQCSYEHCSTSFHVTCAHAAGVLMEPDDWPYVVSITCLKHK. Tudor domains follow at residues 917–974 and 975–1031; these read RAVS…CVQL and GPPS…EELP. Residues 1037 to 1073 are disordered; it reads RLSLSTGAPQEPAFSGEEAKAAKRPRVGTPLATEDSG. T1065 carries the post-translational modification Phosphothreonine.

This sequence belongs to the JHDM3 histone demethylase family. Requires Fe(2+) as cofactor.

The protein resides in the nucleus. It catalyses the reaction N(6),N(6),N(6)-trimethyl-L-lysyl(9)-[histone H3] + 2 2-oxoglutarate + 2 O2 = N(6)-methyl-L-lysyl(9)-[histone H3] + 2 formaldehyde + 2 succinate + 2 CO2. Functionally, histone demethylase that specifically demethylates 'Lys-9' of histone H3, thereby playing a role in histone code. Does not demethylate histone H3 'Lys-4', H3 'Lys-27', H3 'Lys-36' nor H4 'Lys-20'. Only able to demethylate trimethylated H3 'Lys-9', with a weaker activity than KDM4A, KDM4C and KDM4D. Demethylation of Lys residue generates formaldehyde and succinate. Plays a critical role in the development of the central nervous system (CNS). This is Lysine-specific demethylase 4B (KDM4B) from Homo sapiens (Human).